The primary structure comprises 762 residues: FAST kinase domain-containing protein 5, mitochondrial (762 aa).

Residue Ser95 is modified to Phosphoserine. Residue Lys506 is modified to N6-acetyllysine. Residues 695 to 755 (LAIQFTNKNQ…RLEKLAYLHE (61 aa)) form the RAP domain.

The protein belongs to the FAST kinase family. In terms of assembly, found in a complex with GRSF1, DDX28, DHX30 and FASTKD2. Associates with the 12S mitochondrial rRNA (12S mt-rRNA). Expression detected in spleen, testis, colon, heart, smooth muscle, kidney, brain, lung, liver, brown and white adipose tissue.

It localises to the mitochondrion matrix. Its subcellular location is the mitochondrion nucleoid. Its function is as follows. Plays an important role in the processing of non-canonical mitochondrial mRNA precursors. This is FAST kinase domain-containing protein 5, mitochondrial (Fastkd5) from Mus musculus (Mouse).